The chain runs to 538 residues: Guanine nucleotide-binding protein-like 3 (538 aa).

Positions 1–45 are enriched in basic residues; it reads MKRPKLKKASKRMTCHKRYKIQKKVREHHRKLRKEAKKRGHKKPR. Disordered regions lie at residues 1–57 and 69–126; these read MKRP…APFK and QQLE…NPKK. The basic stretch occupies residues 2 to 46; it reads KRPKLKKASKRMTCHKRYKIQKKVREHHRKLRKEAKKRGHKKPRK. A coiled-coil region spans residues 54–95; the sequence is APFKEALLREAELRKQQLEELKQQQKLDRQKEQERKRKLEVS. Residues 69 to 93 show a composition bias toward basic and acidic residues; that stretch reads QQLEELKQQQKLDRQKEQERKRKLE. Lysine 79 carries the N6-acetyllysine modification. A Glycyl lysine isopeptide (Lys-Gly) (interchain with G-Cter in SUMO2) cross-link involves residue lysine 91. A phosphoserine mark is found at serine 95 and serine 101. Basic residues predominate over residues 114–126; it reads RKKAKAGKQNPKK. In terms of domain architecture, CP-type G spans 129-307; sequence CQELKKVIEA…IIDSPCLIIS (179 aa). 176 to 179 contacts GTP; the sequence is NKSD. Glycyl lysine isopeptide (Lys-Gly) (interchain with G-Cter in SUMO2) cross-links involve residues lysine 177, lysine 248, lysine 262, and lysine 270. Residue 256–263 coordinates GTP; it reads GFPNVGKS. The interval 277–451 is intermediate; that stretch reads VGISMGLTRS…HLTNRILFRS (175 aa). 300–303 is a binding site for GTP; the sequence is DSPC. Over residues 460–475 the composition is skewed to basic and acidic residues; the sequence is DEKDIVEESPRQTEDK. The acidic stretch occupies residues 460–532; it reads DEKDIVEESP…RASQEDETYD (73 aa). Residues 460–538 form a disordered region; sequence DEKDIVEESP…ETYDFTTDYI (79 aa). Residues serine 493, serine 505, and serine 518 each carry the phosphoserine modification. A compositionally biased stretch (polar residues) spans 506-518; sequence PEQSTAGKPSDGS.

This sequence belongs to the TRAFAC class YlqF/YawG GTPase family. Interacts with MDM2; this interaction stabilizes MDM2. Interaction with MDM2 occurs in the nucleoplasm and is triggered by a nucleolar release mechanism, such as mitosis-induced nucleolar disassembly. Indirectly interacts with TP53, via MDM2-binding. Interacts with TSC22D1 isoform 2. Expressed in the adult bone marrow population that is enriched in hematopoietic stem cells.

It is found in the nucleus. The protein resides in the nucleolus. Functionally, may be required to maintain the proliferative capacity of stem cells. Stabilizes MDM2 by preventing its ubiquitination, and hence proteasomal degradation. This is Guanine nucleotide-binding protein-like 3 (Gnl3) from Mus musculus (Mouse).